Here is a 362-residue protein sequence, read N- to C-terminus: Holliday junction branch migration complex subunit RuvB (362 aa).

The tract at residues 1–27 (MANIEKTEFHVPAPVSAAGNQKSSLGN) is disordered. The interval 13–206 (APVSAAGNQK…FGFTAQMEFY (194 aa)) is large ATPase domain (RuvB-L). ATP contacts are provided by residues leucine 45, arginine 46, glycine 87, lysine 90, threonine 91, threonine 92, 153–155 (EDF), arginine 196, tyrosine 206, and arginine 243. Threonine 91 lines the Mg(2+) pocket. Residues 207–277 (EVEDLTKVVV…AAQAALVVFD (71 aa)) are small ATPAse domain (RuvB-S). The head domain (RuvB-H) stretch occupies residues 280-362 (EMGLDRLDRA…EPPEGIIGSL (83 aa)). Positions 335 and 340 each coordinate DNA.

The protein belongs to the RuvB family. In terms of assembly, homohexamer. Forms an RuvA(8)-RuvB(12)-Holliday junction (HJ) complex. HJ DNA is sandwiched between 2 RuvA tetramers; dsDNA enters through RuvA and exits via RuvB. An RuvB hexamer assembles on each DNA strand where it exits the tetramer. Each RuvB hexamer is contacted by two RuvA subunits (via domain III) on 2 adjacent RuvB subunits; this complex drives branch migration. In the full resolvosome a probable DNA-RuvA(4)-RuvB(12)-RuvC(2) complex forms which resolves the HJ.

The protein resides in the cytoplasm. It catalyses the reaction ATP + H2O = ADP + phosphate + H(+). Its function is as follows. The RuvA-RuvB-RuvC complex processes Holliday junction (HJ) DNA during genetic recombination and DNA repair, while the RuvA-RuvB complex plays an important role in the rescue of blocked DNA replication forks via replication fork reversal (RFR). RuvA specifically binds to HJ cruciform DNA, conferring on it an open structure. The RuvB hexamer acts as an ATP-dependent pump, pulling dsDNA into and through the RuvAB complex. RuvB forms 2 homohexamers on either side of HJ DNA bound by 1 or 2 RuvA tetramers; 4 subunits per hexamer contact DNA at a time. Coordinated motions by a converter formed by DNA-disengaged RuvB subunits stimulates ATP hydrolysis and nucleotide exchange. Immobilization of the converter enables RuvB to convert the ATP-contained energy into a lever motion, pulling 2 nucleotides of DNA out of the RuvA tetramer per ATP hydrolyzed, thus driving DNA branch migration. The RuvB motors rotate together with the DNA substrate, which together with the progressing nucleotide cycle form the mechanistic basis for DNA recombination by continuous HJ branch migration. Branch migration allows RuvC to scan DNA until it finds its consensus sequence, where it cleaves and resolves cruciform DNA. The chain is Holliday junction branch migration complex subunit RuvB from Corynebacterium diphtheriae (strain ATCC 700971 / NCTC 13129 / Biotype gravis).